A 70-amino-acid polypeptide reads, in one-letter code: U2-agatoxin-Ao1l (70 aa).

The first 20 residues, 1–20 (MRAIISLLLISAMVFSIIEA), serve as a signal peptide directing secretion. The propeptide occupies 21–34 (VPEEEGLQLSEDER). Disulfide bonds link Cys37–Cys53, Cys44–Cys58, and Cys52–Cys68. Leu69 carries the leucine amide modification.

The protein belongs to the neurotoxin 01 (U2-agtx) family. Expressed by the venom gland.

The protein resides in the secreted. Functionally, insect active toxin causing rapid but reversible paralysis in crickets. No activity shown in mammals. Does not show effect on mammalian voltage-gated calcium channels. This is U2-agatoxin-Ao1l from Agelena orientalis (Funnel-web spider).